The chain runs to 433 residues: Serine--tRNA ligase (433 aa).

Thr-236–Glu-238 contributes to the L-serine binding site. Arg-267–Glu-269 lines the ATP pocket. Glu-290 lines the L-serine pocket. Glu-354–Ser-357 contacts ATP. Ser-394 provides a ligand contact to L-serine.

The protein belongs to the class-II aminoacyl-tRNA synthetase family. Type-1 seryl-tRNA synthetase subfamily. Homodimer. The tRNA molecule binds across the dimer.

It localises to the cytoplasm. The catalysed reaction is tRNA(Ser) + L-serine + ATP = L-seryl-tRNA(Ser) + AMP + diphosphate + H(+). The enzyme catalyses tRNA(Sec) + L-serine + ATP = L-seryl-tRNA(Sec) + AMP + diphosphate + H(+). Its pathway is aminoacyl-tRNA biosynthesis; selenocysteinyl-tRNA(Sec) biosynthesis; L-seryl-tRNA(Sec) from L-serine and tRNA(Sec): step 1/1. Catalyzes the attachment of serine to tRNA(Ser). Is also able to aminoacylate tRNA(Sec) with serine, to form the misacylated tRNA L-seryl-tRNA(Sec), which will be further converted into selenocysteinyl-tRNA(Sec). In Acidiphilium cryptum (strain JF-5), this protein is Serine--tRNA ligase.